Consider the following 674-residue polypeptide: E3 ubiquitin ligase Rnf157 (674 aa).

The RING-type zinc finger occupies 277–316 (CVVCLSDVRDTLILPCRHLCLCNACADTLRYQASNCPICR). Disordered stretches follow at residues 376 to 404 (LTPS…GSDI) and 433 to 610 (QNSS…TGRE). Residues 469 to 508 (TPESENLTLSSSGAIDQSSCTGTPLSPTISSPEDPLSSSL) show a composition bias toward polar residues. Residues 509-526 (AQSIMSMASSHSQQSQLS) are compositionally biased toward low complexity. The span at 527-537 (TDTVSSMSGSY) shows a compositional bias: polar residues. Residues 583–604 (EEMDAEGNVTEEEFASPEEDDG) show a composition bias toward acidic residues.

Its subcellular location is the cytoplasm. It catalyses the reaction S-ubiquitinyl-[E2 ubiquitin-conjugating enzyme]-L-cysteine + [acceptor protein]-L-lysine = [E2 ubiquitin-conjugating enzyme]-L-cysteine + N(6)-ubiquitinyl-[acceptor protein]-L-lysine.. Functionally, E3 ubiquitin ligase that ubiquitinates apbb1 for its degradation by the proteasome and thus prevents apoptosis and promotes survival of neurons. Has a dual role in neurons as it is also required for dendrite growth and maintenance for which its ligase activity is not critical. May act as a scaffold molecule to regulate this process. Acts as a downstream effector of the interconnected PI3K and MAPK signaling pathways and thus participates in the regulation of the cell cycle. The chain is E3 ubiquitin ligase Rnf157 (rnf157) from Xenopus laevis (African clawed frog).